Consider the following 196-residue polypeptide: MEGIRRAAQRAVEEFLQAFPMGPGSLFVLGGSTSEVLGERVGTRPSLEAAHAVLEGLLPPLLERGVHVAVQACEHLNRALVVERETARAFGLEEVAVFPHPKAGGALATAAFLRFQDPVVVESLKAQAHGGMDIGGVLIGMHLRPVAVPLRLSVRKIGEAVLLAAKTRPKLVGGARAVYTREEMLKKLEEFLPKPP.

The protein belongs to the UPF0340 family.

This chain is UPF0340 protein TT_C0214, found in Thermus thermophilus (strain ATCC BAA-163 / DSM 7039 / HB27).